A 146-amino-acid polypeptide reads, in one-letter code: Calmodulin-like protein 5 (146 aa).

Residue Ala-2 is modified to N-acetylalanine. EF-hand domains are found at residues 8 to 43 (EEEAQYKKAFSAVDTDGNGTINAQELGAALKATGKN), 44 to 74 (LSEAQLRKLISEVDSDGDGEISFQEFLTAAK), 78 to 113 (AGLEDLQVAFRAFDQDGDGHITVDELRRAMAGLGQP), and 114 to 146 (LPQEELDAMIREADVDQDGRVNYEEFARMLAQE). Asp-21, Asp-23, Asn-25, Thr-27, Glu-32, Asp-57, Asp-59, Asp-61, Glu-63, Glu-68, Asp-91, Asp-93, Asp-95, His-97, Glu-102, Asp-127, Asp-129, Asp-131, Arg-133, and Glu-138 together coordinate Ca(2+).

Associates with transglutaminase 3. Particularly abundant in the epidermis where its expression is directly related to keratinocyte differentiation. Very low expression in lung.

Its function is as follows. Binds calcium. May be involved in terminal differentiation of keratinocytes. The chain is Calmodulin-like protein 5 (CALML5) from Homo sapiens (Human).